We begin with the raw amino-acid sequence, 269 residues long: Formamidopyrimidine-DNA glycosylase (269 aa).

The Schiff-base intermediate with DNA role is filled by proline 2. Glutamate 3 functions as the Proton donor in the catalytic mechanism. The active-site Proton donor; for beta-elimination activity is lysine 57. DNA contacts are provided by histidine 90, arginine 109, and lysine 150. The segment at 235–269 (QVYGKAGEPCPECGEAIQEQKIGQRNTFYCSYCQC) adopts an FPG-type zinc-finger fold. Arginine 259 functions as the Proton donor; for delta-elimination activity in the catalytic mechanism.

This sequence belongs to the FPG family. In terms of assembly, monomer. The cofactor is Zn(2+).

The enzyme catalyses Hydrolysis of DNA containing ring-opened 7-methylguanine residues, releasing 2,6-diamino-4-hydroxy-5-(N-methyl)formamidopyrimidine.. It catalyses the reaction 2'-deoxyribonucleotide-(2'-deoxyribose 5'-phosphate)-2'-deoxyribonucleotide-DNA = a 3'-end 2'-deoxyribonucleotide-(2,3-dehydro-2,3-deoxyribose 5'-phosphate)-DNA + a 5'-end 5'-phospho-2'-deoxyribonucleoside-DNA + H(+). Its function is as follows. Involved in base excision repair of DNA damaged by oxidation or by mutagenic agents. Acts as a DNA glycosylase that recognizes and removes damaged bases. Has a preference for oxidized purines, such as 7,8-dihydro-8-oxoguanine (8-oxoG). Has AP (apurinic/apyrimidinic) lyase activity and introduces nicks in the DNA strand. Cleaves the DNA backbone by beta-delta elimination to generate a single-strand break at the site of the removed base with both 3'- and 5'-phosphates. The protein is Formamidopyrimidine-DNA glycosylase of Vibrio vulnificus (strain CMCP6).